A 726-amino-acid chain; its full sequence is Catalase-peroxidase (726 aa).

The interval 1-33 (MSTTDDTHNTLSTGKCPFHQGGHDRSAGAGTAS) is disordered. The segment at residues 105–226 (WHGAGTYRSI…LGATEMGLIY (122 aa)) is a cross-link (tryptophyl-tyrosyl-methioninium (Trp-Tyr) (with M-252)). His106 (proton acceptor) is an active-site residue. The segment at residues 226–252 (YVNPEGPDHSGEPLSAAAAIRATFGNM) is a cross-link (tryptophyl-tyrosyl-methioninium (Tyr-Met) (with W-105)). His267 is a binding site for heme b.

It belongs to the peroxidase family. Peroxidase/catalase subfamily. Homodimer or homotetramer. Requires heme b as cofactor. In terms of processing, formation of the three residue Trp-Tyr-Met cross-link is important for the catalase, but not the peroxidase activity of the enzyme.

The enzyme catalyses H2O2 + AH2 = A + 2 H2O. The catalysed reaction is 2 H2O2 = O2 + 2 H2O. Bifunctional enzyme with both catalase and broad-spectrum peroxidase activity. The protein is Catalase-peroxidase of Salmonella heidelberg (strain SL476).